The sequence spans 948 residues: UvrABC system protein A (948 aa).

42–49 (GLSGSGKS) contributes to the ATP binding site. The C4-type zinc-finger motif lies at 262 to 289 (CPVCSYSLPELEPRLFSFNNPMGSCPTC). ABC transporter domains are found at residues 319–596 (WDKR…ENSV) and 616–945 (VNPG…KYLK). 649 to 656 (GVSGSGKS) contributes to the ATP binding site. The C4-type zinc finger occupies 748 to 774 (CEACQGDGVIKVEMHFLPDVYVPCEVC).

It belongs to the ABC transporter superfamily. UvrA family. In terms of assembly, forms a heterotetramer with UvrB during the search for lesions.

It is found in the cytoplasm. Its function is as follows. The UvrABC repair system catalyzes the recognition and processing of DNA lesions. UvrA is an ATPase and a DNA-binding protein. A damage recognition complex composed of 2 UvrA and 2 UvrB subunits scans DNA for abnormalities. When the presence of a lesion has been verified by UvrB, the UvrA molecules dissociate. In Neisseria meningitidis serogroup A / serotype 4A (strain DSM 15465 / Z2491), this protein is UvrABC system protein A.